A 62-amino-acid chain; its full sequence is MARYRHSRSRSRSRYRRRRRRRSRYRSRRRRYRGSRRSRSRRRGRRRGYSRRRYSRRRRRRY.

A disordered region spans residues Met1 to Tyr62.

This sequence belongs to the protamine P1 family. In terms of tissue distribution, testis.

Its subcellular location is the nucleus. It localises to the chromosome. Protamines substitute for histones in the chromatin of sperm during the haploid phase of spermatogenesis. They compact sperm DNA into a highly condensed, stable and inactive complex. In Lagostrophus fasciatus (Banded hare-wallaby), this protein is Sperm protamine P1 (PRM1).